Here is a 141-residue protein sequence, read N- to C-terminus: Nucleoside diphosphate kinase (141 aa).

ATP-binding residues include Lys11, Phe59, Arg87, Thr93, Arg104, and Asn114. His117 functions as the Pros-phosphohistidine intermediate in the catalytic mechanism.

This sequence belongs to the NDK family. In terms of assembly, homotetramer. Requires Mg(2+) as cofactor.

It localises to the cytoplasm. The enzyme catalyses a 2'-deoxyribonucleoside 5'-diphosphate + ATP = a 2'-deoxyribonucleoside 5'-triphosphate + ADP. It catalyses the reaction a ribonucleoside 5'-diphosphate + ATP = a ribonucleoside 5'-triphosphate + ADP. Functionally, major role in the synthesis of nucleoside triphosphates other than ATP. The ATP gamma phosphate is transferred to the NDP beta phosphate via a ping-pong mechanism, using a phosphorylated active-site intermediate. This is Nucleoside diphosphate kinase from Pseudomonas putida (strain W619).